The sequence spans 201 residues: Large ribosomal subunit protein uL4 (201 aa).

The disordered stretch occupies residues 42–67 (GNSAQKTRSEVSGGGKKPWNQKGTGR).

It belongs to the universal ribosomal protein uL4 family. Part of the 50S ribosomal subunit.

In terms of biological role, one of the primary rRNA binding proteins, this protein initially binds near the 5'-end of the 23S rRNA. It is important during the early stages of 50S assembly. It makes multiple contacts with different domains of the 23S rRNA in the assembled 50S subunit and ribosome. Functionally, forms part of the polypeptide exit tunnel. This Legionella pneumophila (strain Paris) protein is Large ribosomal subunit protein uL4.